A 553-amino-acid polypeptide reads, in one-letter code: Methyl-coenzyme M reductase I subunit alpha (553 aa).

Coenzyme F430 is bound at residue Gln150. Coenzyme B is bound by residues Arg228, 259 to 260 (KH), and Arg273. Residue Arg274 is modified to 5-methylarginine. 2 residues coordinate coenzyme M: Tyr335 and Tyr447.

Belongs to the methyl-coenzyme M reductase alpha subunit family. MCR is a hexamer of two alpha, two beta, and two gamma chains, forming a dimer of heterotrimers. Coenzyme F430 is required as a cofactor. Is methylated on C5 of Arg-274 by the methyltransferase MJ0841. This post-translational methylation, despite being not essential in vivo, plays a role for the stability and structural integrity of MCR.

It localises to the cytoplasm. The catalysed reaction is coenzyme B + methyl-coenzyme M = methane + coenzyme M-coenzyme B heterodisulfide. The protein operates within one-carbon metabolism; methyl-coenzyme M reduction; methane from methyl-coenzyme M: step 1/1. In terms of biological role, component of the methyl-coenzyme M reductase (MCR) I that catalyzes the reductive cleavage of methyl-coenzyme M (CoM-S-CH3 or 2-(methylthio)ethanesulfonate) using coenzyme B (CoB or 7-mercaptoheptanoylthreonine phosphate) as reductant which results in the production of methane and the mixed heterodisulfide of CoB and CoM (CoM-S-S-CoB). This is the final step in methanogenesis. The chain is Methyl-coenzyme M reductase I subunit alpha (mcrA) from Methanocaldococcus jannaschii (strain ATCC 43067 / DSM 2661 / JAL-1 / JCM 10045 / NBRC 100440) (Methanococcus jannaschii).